We begin with the raw amino-acid sequence, 382 residues long: Chaperone protein DnaJ (382 aa).

In terms of domain architecture, J spans 5–70 (DYYEVLGVSR…DKKAAYDRYG (66 aa)). The CR-type zinc finger occupies 141 to 219 (GVQKTINVPA…CHGAGRVEKE (79 aa)). Zn(2+) contacts are provided by Cys-154, Cys-157, Cys-171, Cys-174, Cys-193, Cys-196, Cys-207, and Cys-210. 4 CXXCXGXG motif repeats span residues 154-161 (CDACKGTG), 171-178 (CPTCSGMG), 193-200 (CPTCNGMG), and 207-214 (CKVCHGAG).

This sequence belongs to the DnaJ family. Homodimer. Zn(2+) serves as cofactor.

The protein resides in the cytoplasm. In terms of biological role, participates actively in the response to hyperosmotic and heat shock by preventing the aggregation of stress-denatured proteins and by disaggregating proteins, also in an autonomous, DnaK-independent fashion. Unfolded proteins bind initially to DnaJ; upon interaction with the DnaJ-bound protein, DnaK hydrolyzes its bound ATP, resulting in the formation of a stable complex. GrpE releases ADP from DnaK; ATP binding to DnaK triggers the release of the substrate protein, thus completing the reaction cycle. Several rounds of ATP-dependent interactions between DnaJ, DnaK and GrpE are required for fully efficient folding. Also involved, together with DnaK and GrpE, in the DNA replication of plasmids through activation of initiation proteins. The polypeptide is Chaperone protein DnaJ (Cereibacter sphaeroides (strain ATCC 17023 / DSM 158 / JCM 6121 / CCUG 31486 / LMG 2827 / NBRC 12203 / NCIMB 8253 / ATH 2.4.1.) (Rhodobacter sphaeroides)).